A 269-amino-acid polypeptide reads, in one-letter code: Tryptophan synthase alpha chain (269 aa).

Catalysis depends on proton acceptor residues Glu-49 and Asp-60.

It belongs to the TrpA family. In terms of assembly, tetramer of two alpha and two beta chains.

The enzyme catalyses (1S,2R)-1-C-(indol-3-yl)glycerol 3-phosphate + L-serine = D-glyceraldehyde 3-phosphate + L-tryptophan + H2O. It participates in amino-acid biosynthesis; L-tryptophan biosynthesis; L-tryptophan from chorismate: step 5/5. Its function is as follows. The alpha subunit is responsible for the aldol cleavage of indoleglycerol phosphate to indole and glyceraldehyde 3-phosphate. The chain is Tryptophan synthase alpha chain from Pseudomonas syringae pv. syringae.